A 156-amino-acid polypeptide reads, in one-letter code: FAD synthase (156 aa).

ATP is bound by residues 16-17 (TF), 21-24 (HPGH), D101, and Y129.

The protein belongs to the archaeal FAD synthase family. In terms of assembly, homodimer. Requires a divalent metal cation as cofactor.

It catalyses the reaction FMN + ATP + H(+) = FAD + diphosphate. It functions in the pathway cofactor biosynthesis; FAD biosynthesis; FAD from FMN: step 1/1. In terms of biological role, catalyzes the transfer of the AMP portion of ATP to flavin mononucleotide (FMN) to produce flavin adenine dinucleotide (FAD) coenzyme. This is FAD synthase from Methanococcus aeolicus (strain ATCC BAA-1280 / DSM 17508 / OCM 812 / Nankai-3).